A 352-amino-acid polypeptide reads, in one-letter code: Cell division protein ZipA (352 aa).

The Periplasmic portion of the chain corresponds to 1-5 (MQELR). A helical membrane pass occupies residues 6-26 (LVLIIVGALAISALLLHGLWT). Topologically, residues 27–352 (SRKEKPAKFG…REKAKLYSQA (326 aa)) are cytoplasmic. A compositionally biased stretch (basic and acidic residues) spans 35–54 (FGEKPLGKLDDSNRDTEGFD). Positions 35 to 56 (FGEKPLGKLDDSNRDTEGFDHT) are disordered.

This sequence belongs to the ZipA family. In terms of assembly, interacts with FtsZ via their C-terminal domains.

It localises to the cell inner membrane. Essential cell division protein that stabilizes the FtsZ protofilaments by cross-linking them and that serves as a cytoplasmic membrane anchor for the Z ring. Also required for the recruitment to the septal ring of downstream cell division proteins. In Photobacterium profundum (strain SS9), this protein is Cell division protein ZipA.